Here is a 296-residue protein sequence, read N- to C-terminus: Porphobilinogen deaminase (296 aa).

The residue at position 235 (C235) is an S-(dipyrrolylmethanemethyl)cysteine.

This sequence belongs to the HMBS family. Monomer. The cofactor is dipyrromethane.

The enzyme catalyses 4 porphobilinogen + H2O = hydroxymethylbilane + 4 NH4(+). It functions in the pathway porphyrin-containing compound metabolism; protoporphyrin-IX biosynthesis; coproporphyrinogen-III from 5-aminolevulinate: step 2/4. Tetrapolymerization of the monopyrrole PBG into the hydroxymethylbilane pre-uroporphyrinogen in several discrete steps. This Alkaliphilus oremlandii (strain OhILAs) (Clostridium oremlandii (strain OhILAs)) protein is Porphobilinogen deaminase.